Consider the following 489-residue polypeptide: Glutamate--tRNA ligase (489 aa).

The 'HIGH' region signature appears at 11–21 (PSPTGHLHIGG). The short motif at 253–257 (KLSKR) is the 'KMSKS' region element. Lys-256 lines the ATP pocket.

The protein belongs to the class-I aminoacyl-tRNA synthetase family. Glutamate--tRNA ligase type 1 subfamily. Monomer.

It is found in the cytoplasm. The catalysed reaction is tRNA(Glu) + L-glutamate + ATP = L-glutamyl-tRNA(Glu) + AMP + diphosphate. Catalyzes the attachment of glutamate to tRNA(Glu) in a two-step reaction: glutamate is first activated by ATP to form Glu-AMP and then transferred to the acceptor end of tRNA(Glu). This chain is Glutamate--tRNA ligase, found in Geobacillus stearothermophilus (Bacillus stearothermophilus).